The primary structure comprises 130 residues: Large ribosomal subunit protein bL12 (130 aa).

Residues 94–114 (MTEGLPKTVKEKTSKSDAEDT) form a disordered region.

This sequence belongs to the bacterial ribosomal protein bL12 family. Homodimer. Part of the ribosomal stalk of the 50S ribosomal subunit. Forms a multimeric L10(L12)X complex, where L10 forms an elongated spine to which 2 to 4 L12 dimers bind in a sequential fashion. Binds GTP-bound translation factors.

Forms part of the ribosomal stalk which helps the ribosome interact with GTP-bound translation factors. Is thus essential for accurate translation. This is Large ribosomal subunit protein bL12 from Chlamydia caviae (strain ATCC VR-813 / DSM 19441 / 03DC25 / GPIC) (Chlamydophila caviae).